The chain runs to 585 residues: Ankyrin repeat protein OPG003 (585 aa).

ANK repeat units lie at residues 66–98 (CGMS…NFDN), 172–220 (DGLT…NINA), 224–256 (IGNT…DTRI), 297–333 (EGHH…QKDE), and 336–365 (NTMT…DINL). A PRANC/F-box-like region spans residues 554 to 571 (LPPEIIRNIITKLSDYHL).

Belongs to the orthopoxvirus OPG003 family.

Its function is as follows. May be involved in virus-host protein interaction through the ankyrin repeats and PRANC regions. In Homo sapiens (Human), this protein is Ankyrin repeat protein OPG003 (OPG003).